Reading from the N-terminus, the 173-residue chain is Gamma-crystallin S-2 (173 aa).

2 Beta/gamma crystallin 'Greek key' domains span residues 2–40 (GKII…RVES) and 41–83 (DWWV…RVPT). A connecting peptide region spans residues 84-88 (HTQRP). Beta/gamma crystallin 'Greek key' domains are found at residues 89 to 129 (YRMR…HVMG) and 130 to 172 (AYWI…RRIM).

Belongs to the beta/gamma-crystallin family.

In terms of biological role, crystallins are the dominant structural components of the vertebrate eye lens. The chain is Gamma-crystallin S-2 (GS-2) from Chiloscyllium indicum (Slender bamboo shark).